The sequence spans 673 residues: Probable urea active transporter 2 (673 aa).

14 helical membrane-spanning segments follow: residues 8-28 (GYGYGFALGLGAAFALLMAII), 83-103 (IMGGFMYGVGGTIQITLFLFL), 132-152 (VYLFYCISTNVLVSSLLLLGG), 164-184 (TVAACFLLPLGVMVYTTLGGL), 196-218 (VMIYIILIVTCYTVYCSSSLIGS), 249-269 (MMYLTWSVMIGGLSSVFGDPG), 287-307 (LMGGLCWWIIPMALGSSAGLA), 336-356 (IYGMASIFGKSGAAAGLVMLF), 391-411 (QLVRTAHLSVIGFSLFIGALS), 424-446 (LLTFLGIILTPEVSAVTLCLFWN), 451-471 (FSLVVGAPFGTITGVVCWLAS), 492-512 (FVGNIVSMASSPLYIVLLSYI), 559-579 (IGINLFILIGCYVIIPTALLG), and 592-612 (LIIVCLIWILVAAIYIILFPL).

Belongs to the sodium:solute symporter (SSF) (TC 2.A.21) family.

Its subcellular location is the endoplasmic reticulum membrane. Functionally, involved in active transport of urea. The chain is Probable urea active transporter 2 (dur3-2) from Schizosaccharomyces pombe (strain 972 / ATCC 24843) (Fission yeast).